The sequence spans 155 residues: Small ribosomal subunit protein uS7c (155 aa).

This sequence belongs to the universal ribosomal protein uS7 family. Part of the 30S ribosomal subunit.

Its subcellular location is the plastid. The protein resides in the chloroplast. In terms of biological role, one of the primary rRNA binding proteins, it binds directly to 16S rRNA where it nucleates assembly of the head domain of the 30S subunit. In Canella winterana (Wild cinnamon), this protein is Small ribosomal subunit protein uS7c (rps7).